Reading from the N-terminus, the 88-residue chain is LYR motif-containing protein 2 (88 aa).

The N-terminal 19 residues, 1-19 (MAASRLPPAALTLKQFMRR), are a transit peptide targeting the mitochondrion.

It belongs to the complex I LYR family.

It localises to the mitochondrion. Functionally, involved in efficient integration of the N-module into mitochondrial respiratory chain complex I. The polypeptide is LYR motif-containing protein 2 (Lyrm2) (Mus musculus (Mouse)).